We begin with the raw amino-acid sequence, 177 residues long: Large ribosomal subunit protein uL6 (177 aa).

It belongs to the universal ribosomal protein uL6 family. Part of the 50S ribosomal subunit.

Its function is as follows. This protein binds to the 23S rRNA, and is important in its secondary structure. It is located near the subunit interface in the base of the L7/L12 stalk, and near the tRNA binding site of the peptidyltransferase center. This Nitrobacter winogradskyi (strain ATCC 25391 / DSM 10237 / CIP 104748 / NCIMB 11846 / Nb-255) protein is Large ribosomal subunit protein uL6.